The primary structure comprises 341 residues: Pyrophosphate--fructose 6-phosphate 1-phosphotransferase (341 aa).

Gly10 lines the diphosphate pocket. Position 103 (Glu103) interacts with Mg(2+). Residues 125–127, Arg162, 169–171, Glu221, Arg265, and 271–274 contribute to the substrate site; these read TID, MGR, and HVQR. The active-site Proton acceptor is the Asp127.

The protein belongs to the phosphofructokinase type A (PFKA) family. Mixed-substrate PFK group III subfamily. As to quaternary structure, homodimer or homotetramer. Requires Mg(2+) as cofactor.

Its subcellular location is the cytoplasm. The catalysed reaction is beta-D-fructose 6-phosphate + diphosphate = beta-D-fructose 1,6-bisphosphate + phosphate + H(+). It participates in carbohydrate degradation; glycolysis; D-glyceraldehyde 3-phosphate and glycerone phosphate from D-glucose: step 3/4. With respect to regulation, non-allosteric. In terms of biological role, catalyzes the phosphorylation of D-fructose 6-phosphate, the first committing step of glycolysis. Uses inorganic phosphate (PPi) as phosphoryl donor instead of ATP like common ATP-dependent phosphofructokinases (ATP-PFKs), which renders the reaction reversible, and can thus function both in glycolysis and gluconeogenesis. Consistently, PPi-PFK can replace the enzymes of both the forward (ATP-PFK) and reverse (fructose-bisphosphatase (FBPase)) reactions. The chain is Pyrophosphate--fructose 6-phosphate 1-phosphotransferase from Amycolatopsis mediterranei (strain S699) (Nocardia mediterranei).